Consider the following 59-residue polypeptide: Large ribosomal subunit protein uL30 (59 aa).

It belongs to the universal ribosomal protein uL30 family. Part of the 50S ribosomal subunit.

In Syntrophotalea carbinolica (strain DSM 2380 / NBRC 103641 / GraBd1) (Pelobacter carbinolicus), this protein is Large ribosomal subunit protein uL30.